Consider the following 207-residue polypeptide: LexA repressor (207 aa).

Residues 29-49 (VREICSAVDLSSTSTVHGHLA) constitute a DNA-binding region (H-T-H motif). Active-site for autocatalytic cleavage activity residues include S128 and K166.

The protein belongs to the peptidase S24 family. Homodimer.

The enzyme catalyses Hydrolysis of Ala-|-Gly bond in repressor LexA.. In terms of biological role, represses a number of genes involved in the response to DNA damage (SOS response), including recA and lexA. In the presence of single-stranded DNA, RecA interacts with LexA causing an autocatalytic cleavage which disrupts the DNA-binding part of LexA, leading to derepression of the SOS regulon and eventually DNA repair. The sequence is that of LexA repressor from Lactobacillus johnsonii (strain CNCM I-12250 / La1 / NCC 533).